We begin with the raw amino-acid sequence, 410 residues long: Protein CNPPD1 (410 aa).

A helical membrane pass occupies residues 233 to 253 (CLLAVAYVSSVALAVASVAVI).

Belongs to the CNPPD1 family.

Its subcellular location is the membrane. The sequence is that of Protein CNPPD1 (CNPPD1) from Pongo abelii (Sumatran orangutan).